We begin with the raw amino-acid sequence, 101 residues long: uncharacterized protein (101 aa).

The protein localises to the mitochondrion. This is an uncharacterized protein from Arabidopsis thaliana (Mouse-ear cress).